Reading from the N-terminus, the 345-residue chain is Small ribosomal subunit biogenesis GTPase RsgA (345 aa).

The segment at 1-36 (MSKNKLSKGQERRVQANHQRRLQQRERGAAHWDDQP) is disordered. Residues 23–34 (QQRERGAAHWDD) are compositionally biased toward basic and acidic residues. Residues 103 to 273 (RSVLTRPDVY…LIDSPGVREL (171 aa)) enclose the CP-type G domain. GTP contacts are provided by residues 159 to 162 (NKID) and 213 to 221 (GQSGVGKSS). Zn(2+)-binding residues include C297, C302, H304, and C310.

The protein belongs to the TRAFAC class YlqF/YawG GTPase family. RsgA subfamily. Monomer. Associates with 30S ribosomal subunit, binds 16S rRNA. The cofactor is Zn(2+).

The protein resides in the cytoplasm. Its function is as follows. One of several proteins that assist in the late maturation steps of the functional core of the 30S ribosomal subunit. Helps release RbfA from mature subunits. May play a role in the assembly of ribosomal proteins into the subunit. Circularly permuted GTPase that catalyzes slow GTP hydrolysis, GTPase activity is stimulated by the 30S ribosomal subunit. The protein is Small ribosomal subunit biogenesis GTPase RsgA of Sodalis glossinidius (strain morsitans).